The sequence spans 347 residues: Large ribosomal subunit protein uL10 (347 aa).

Positions 312-347 (AAAPAEEEVKKEEEPEEEEEDHAEEDGMAGLGALFG) are disordered. Positions 325 to 338 (EPEEEEEDHAEEDG) are enriched in acidic residues.

This sequence belongs to the universal ribosomal protein uL10 family. Part of the 50S ribosomal subunit. Forms part of the ribosomal stalk which helps the ribosome interact with GTP-bound translation factors. Forms a heptameric L10(L12)2(L12)2(L12)2 complex, where L10 forms an elongated spine to which the L12 dimers bind in a sequential fashion.

Its function is as follows. Forms part of the ribosomal stalk, playing a central role in the interaction of the ribosome with GTP-bound translation factors. This is Large ribosomal subunit protein uL10 from Methanosarcina acetivorans (strain ATCC 35395 / DSM 2834 / JCM 12185 / C2A).